Reading from the N-terminus, the 639-residue chain is Chaperone protein DnaK (639 aa).

T198 carries the phosphothreonine; by autocatalysis modification. Positions 602 to 639 (QAKSQAQGGDNADAGKQANATADDVVDAEFEEVKDDKK) are disordered. A compositionally biased stretch (acidic residues) spans 625-639 (DVVDAEFEEVKDDKK).

The protein belongs to the heat shock protein 70 family.

Functionally, acts as a chaperone. The protein is Chaperone protein DnaK of Shewanella baltica (strain OS195).